The primary structure comprises 215 residues: Adenylate kinase (215 aa).

10–15 (GAGKGT) lines the ATP pocket. An NMP region spans residues 30 to 59 (STGDIFRDAVNQGSELGQEAQKYMSSGQLV). Residues threonine 31, arginine 36, 57 to 59 (QLV), 85 to 88 (GFPR), and glutamine 92 each bind AMP. The segment at 126–163 (GRISCRECKRVYNLNFNPPREQGKCDSCGGELVQRNDD) is LID. Arginine 127 contacts ATP. Positions 130 and 133 each coordinate Zn(2+). 136–137 (VY) is a binding site for ATP. Zn(2+)-binding residues include cysteine 150 and cysteine 153. AMP contacts are provided by arginine 160 and arginine 171. Arginine 199 is an ATP binding site.

It belongs to the adenylate kinase family. In terms of assembly, monomer.

The protein resides in the cytoplasm. It carries out the reaction AMP + ATP = 2 ADP. The protein operates within purine metabolism; AMP biosynthesis via salvage pathway; AMP from ADP: step 1/1. Its function is as follows. Catalyzes the reversible transfer of the terminal phosphate group between ATP and AMP. Plays an important role in cellular energy homeostasis and in adenine nucleotide metabolism. This chain is Adenylate kinase, found in Syntrophomonas wolfei subsp. wolfei (strain DSM 2245B / Goettingen).